A 590-amino-acid chain; its full sequence is Complement component C8 beta chain (590 aa).

The first 32 residues, 1–32 (MKKSWTWTWRVPAELLLLCAALGCLCVPGSRS), serve as a signal peptide directing secretion. The propeptide occupies 33 to 54 (ERPRSLEPTVVNRSLAKSRHSR). An N-linked (GlcNAc...) asparagine glycan is attached at asparagine 44. Residues 64-117 (DCELSSWSSWTMCDPCQKKRYRHAYLLRPSQFNGEPCNFSDKEVEDCATSRPCR) enclose the TSP type-1 1 domain. 7 cysteine pairs are disulfide-bonded: cysteine 65–cysteine 100, cysteine 76–cysteine 110, cysteine 79–cysteine 116, cysteine 122–cysteine 133, cysteine 127–cysteine 146, cysteine 140–cysteine 155, and cysteine 162–cysteine 200. Residues tryptophan 70 and tryptophan 73 are each glycosylated (C-linked (Man) tryptophan). N-linked (GlcNAc...) asparagine glycosylation is present at asparagine 101. Residues 120–157 (VRCEGFVCAQTGRCVNRRLLCNGDNDCGDQSDEANCRK) form the LDL-receptor class A domain. Leucine 138, asparagine 141, aspartate 143, aspartate 145, aspartate 151, and glutamate 152 together coordinate Ca(2+). In terms of domain architecture, MACPF spans 158–504 (IYKKCHHEME…EFQGEVSPCR (347 aa)). A run of 4 beta stranded transmembrane segments spans residues 252 to 259 (STFNLGFK), 262 to 269 (SIFEFGIN), 379 to 386 (AKNDFKLG), and 392 to 399 (VYVSLGVS). A disulfide bridge links cysteine 378 with cysteine 403. Threonine 418 is modified (phosphothreonine). Intrachain disulfides connect cysteine 503–cysteine 550, cysteine 505–cysteine 521, cysteine 508–cysteine 523, and cysteine 525–cysteine 534. The EGF-like domain maps to 505–535 (CAPCQGNGVPVQKGSRCDCICPVGFQGSACE). Residues 545–588 (DGRWSCWSRWSSCSGGQKTRRRQCNNPAPQDGGSPCSGPASETL) form the TSP type-1 2 domain. C-linked (Man) tryptophan glycans are attached at residues tryptophan 551 and tryptophan 554. Cysteine 557 and cysteine 590 form a disulfide bridge. Residues 557–590 (CSGGQKTRRRQCNNPAPQDGGSPCSGPASETLAC) are disordered.

This sequence belongs to the complement C6/C7/C8/C9 family. In terms of assembly, heterotrimer of 3 chains: alpha (C8A), beta (C8B) and gamma (C8G); the alpha and gamma chains are disulfide bonded. Component of the membrane attack complex (MAC), composed of complement C5b, C6, C7, C8A, C8B, C8G and multiple copies of the pore-forming subunit C9. In terms of processing, N-glycosylated; contains one or two bound glycans. Not O-glycosylated.

It is found in the secreted. The protein localises to the target cell membrane. With respect to regulation, membrane attack complex (MAC) assembly is inhibited by CD59, thereby protecting self-cells from damage during complement activation. CD59 acts by binding to the beta-haipins of C8 (C8A and C8B), forming an intermolecular beta-sheet that prevents incorporation of the multiple copies of C9 required for complete formation of the osmolytic pore. MAC assembly is also inhibited by clusterin (CLU) chaperones that inhibit polymerization of C9. Component of the membrane attack complex (MAC), a multiprotein complex activated by the complement cascade, which inserts into a target cell membrane and forms a pore, leading to target cell membrane rupture and cell lysis. The MAC is initiated by proteolytic cleavage of C5 into complement C5b in response to the classical, alternative, lectin and GZMK complement pathways. The complement pathways consist in a cascade of proteins that leads to phagocytosis and breakdown of pathogens and signaling that strengthens the adaptive immune system. C8B, together with C8A and C8G, inserts into the target membrane, but does not form pores by itself. During MAC assembly, associates with C5b, C6 and C7 to form the C5b8 intermediate complex that inserts into the target membrane and traverses the bilayer increasing membrane rigidity. In Oryctolagus cuniculus (Rabbit), this protein is Complement component C8 beta chain (C8B).